We begin with the raw amino-acid sequence, 2343 residues long: Coagulation factor VIII (2343 aa).

Positions 1 to 19 (MQVELYTCCFLCLLPFSLS) are cleaved as a signal peptide. Plastocyanin-like domains lie at 20-199 (ATRK…LLVC) and 207-343 (ERTQ…VDSC). One can recognise an F5/8 type A 1 domain in the interval 20–343 (ATRKYYLGAV…MEAYVKVDSC (324 aa)). Asn-233 and Asn-253 each carry an N-linked (GlcNAc...) asparagine glycan. 2 positions are modified to sulfotyrosine: Tyr-359 and Tyr-408. Plastocyanin-like domains lie at 393 to 567 (KTWV…LLIC) and 577 to 724 (NQMM…VSSC). The region spanning 393–724 (KTWVHYIAAE…MTALLKVSSC (332 aa)) is the F5/8 type A 2 domain. N-linked (GlcNAc...) asparagine glycosylation occurs at Asn-595. 3 positions are modified to sulfotyrosine: Tyr-731, Tyr-732, and Tyr-736. The segment covering 752-761 (PRSFSQNSRH) has biased composition (polar residues). Disordered regions lie at residues 752–774 (PRSF…ATTT) and 828–865 (ADDH…PEPE). The segment at 754–1659 (SFSQNSRHPS…NPPVSKHHQR (906 aa)) is b. Composition is skewed to basic and acidic residues over residues 828 to 841 (ADDH…RNKG) and 850 to 861 (PELRHSEDREFT). 11 N-linked (GlcNAc...) asparagine glycosylation sites follow: Asn-877, Asn-921, Asn-937, Asn-938, Asn-956, Asn-1007, Asn-1019, Asn-1037, Asn-1062, Asn-1069, and Asn-1080. The tract at residues 1124 to 1147 (GKNSLSSEQRPSPKQLTSLGSEKS) is disordered. Over residues 1125–1147 (KNSLSSEQRPSPKQLTSLGSEKS) the composition is skewed to polar residues. Asn-1179, Asn-1193, Asn-1275, Asn-1290, Asn-1308, Asn-1341, Asn-1391, Asn-1419, Asn-1429, Asn-1453, Asn-1547, and Asn-1618 each carry an N-linked (GlcNAc...) asparagine glycan. The span at 1302–1314 (TTRMSSNASQHVI) shows a compositional bias: polar residues. The segment at 1302 to 1326 (TTRMSSNASQHVITQRGKRSLKQPR) is disordered. Residues 1592-1632 (KSQKKSQTNTAFKRKDTILPLGPCENNDSTAAINEGQDKPQ) form a disordered region. A sulfotyrosine mark is found at Tyr-1675 and Tyr-1691. 2 Plastocyanin-like domains span residues 1705-1869 (KTRH…LLIC) and 1879-2032 (GRQV…SKKC). The 328-residue stretch at 1705–2032 (KTRHYFIAAV…TLFLVYSKKC (328 aa)) folds into the F5/8 type A 3 domain. N-linked (GlcNAc...) asparagine glycosylation occurs at Asn-1821. 2 F5/8 type C domains span residues 2032-2180 (CQTP…LLGC) and 2185-2337 (CSMP…VLGC). Cystine bridges form between Cys-2032/Cys-2180 and Cys-2185/Cys-2337. Residues Asn-2129 and Asn-2281 are each glycosylated (N-linked (GlcNAc...) asparagine).

The protein belongs to the multicopper oxidase family. Interacts with vWF. vWF binding is essential for the stabilization of F8 in circulation. Proteolytically cleaved by cathepsin CTSG to produce a partially activated form.

It localises to the secreted. The protein localises to the extracellular space. In terms of biological role, factor VIII, along with calcium and phospholipid, acts as a cofactor for factor IXa when it converts factor X to the activated form, factor Xa. This chain is Coagulation factor VIII (F8), found in Canis lupus familiaris (Dog).